The following is a 143-amino-acid chain: MAKKIVGFIKLQVPAGKANPSPPIGPALGQRGLNIMEFCKAFNAKTQGMEPGLPIPVVITAFADKSFTFIMKTPPATVLIKKASGVQKGSAKPHTDKVGTLTRAQAEEIAKTKQPDLTAADLDAAVRTIAGSARSMGITVEGV.

It belongs to the universal ribosomal protein uL11 family. Part of the ribosomal stalk of the 50S ribosomal subunit. Interacts with L10 and the large rRNA to form the base of the stalk. L10 forms an elongated spine to which L12 dimers bind in a sequential fashion forming a multimeric L10(L12)X complex. Post-translationally, one or more lysine residues are methylated.

In terms of biological role, forms part of the ribosomal stalk which helps the ribosome interact with GTP-bound translation factors. The polypeptide is Large ribosomal subunit protein uL11 (Bordetella parapertussis (strain 12822 / ATCC BAA-587 / NCTC 13253)).